Consider the following 185-residue polypeptide: Translocon-associated protein subunit gamma (185 aa).

The residue at position 1 (M1) is an N-acetylmethionine. The Lumenal portion of the chain corresponds to 1–27; the sequence is MAPKGGSKQQSEEDLLLQDFSRNLSAK. Phosphoserine is present on residues S7 and S11. The helical transmembrane segment at 28–48 threads the bilayer; that stretch reads SSALFFGNAFIVSAIPIWLYW. The Cytoplasmic portion of the chain corresponds to 49–54; it reads RIWHMD. The chain crosses the membrane as a helical span at residues 55-76; the sequence is LIQSAVLYSVMTLVSTYLVAFA. The Lumenal segment spans residues 77–135; that stretch reads YKNVKFVLKHKVAQKREDAVSKEVTRKLSEADNRKMSRKEKDERILWKKNEVADYEATT. At S105 the chain carries Phosphoserine. Residues 136–157 traverse the membrane as a helical segment; sequence FSIFYNNTLFLVLVIVASFFIL. Residues 158–163 are Cytoplasmic-facing; the sequence is KNFNPT. The chain crosses the membrane as a helical span at residues 164–184; that stretch reads VNYILSISASSGLIALLSTGS.

The protein belongs to the TRAP-gamma family. As to quaternary structure, heterotetramer of TRAP-alpha, TRAP-beta, TRAP-delta and TRAP-gamma.

The protein localises to the endoplasmic reticulum membrane. TRAP proteins are part of a complex whose function is to bind calcium to the ER membrane and thereby regulate the retention of ER resident proteins. The sequence is that of Translocon-associated protein subunit gamma (Ssr3) from Mus musculus (Mouse).